We begin with the raw amino-acid sequence, 174 residues long: Sarcoplasmic calcium-binding protein (174 aa).

N-acetylserine is present on Ser-1. 4 EF-hand domains span residues 3 to 38 (LWVQ…FAKE), 55 to 90 (GVWD…EAKS), 91 to 126 (VVEG…LGLD), and 127 to 160 (KTMA…FFMN). Residues Asp-16, Asp-18, Asp-20, and Asp-27 each contribute to the Ca(2+) site. Asp-104, Asn-106, Asp-108, Asn-110, Glu-115, Asp-138, Asn-140, Asp-142, and Glu-149 together coordinate Ca(2+).

In terms of biological role, like parvalbumins, SCPs seem to be more abundant in fast contracting muscles, but no functional relationship can be established from this distribution. The sequence is that of Sarcoplasmic calcium-binding protein from Hediste diversicolor (Sandworm).